The sequence spans 735 residues: MTSTGKDGGGAQHAQYVGPYRLEKTLGKGQTGLVKLGIHCVTCQKVAIKIVNREKLSESVLMKVEREIAILKLIEHPHVLKLHDVYENKKYLYLVLEHVSGGELFDYLVKKGRLTPKEARKFFRQIISALDFCHSHSICHRDLKPENLLLDERNNIRIADFGMASLQVGDSLLETSCGSPHYACPEVIRGEKYDGRKADVWSCGVILFALLVGALPFDDDNLRQLLEKVKRGVFHMPHFIPPDCQSLLRGMIEVDAARRLTLEHIQKHIWYIGGKNEPEPEQPIPRKVQIRSLPSLEDIDPDVLDSMHSLGCFRDRNKLLQDLLSEEENQEKMIYFLLLDRKERYPSHEDEDLPPRNEIDPPRKRVDSPMLNRHGKRRPERKSMEVLSVTDGGSPVPARRAIEMAQHGQRSRSISGASSGLSTSPLSSPRVTPHPSPRGSPLPTPKGTPVHTPKESPAGTPNPTPPSSPSVGGVPWRTRLNSIKNSFLGSPRFHRRKLQVPTPEEMSNLTPESSPELAKKSWFGNFINLEKEEQIFVVIKDKPLSSIKADIVHAFLSIPSLSHSVISQTSFRAEYKATGGPAVFQKPVKFQVDITYTEGGEAQKENGIYSVTFTLLSGPSRRFKRVVETIQAQLLSTHDQPSAQHLSDTTNCMEVMTGRLSKCGTPLSNFFDVIKQLFSDEKNGQAAQAPSTPAKRSAHGPLGDSAAAGPGGDTEYPMGKDMAKMGPPAARREQP.

The Protein kinase domain occupies Tyr-20–Tyr-271. ATP is bound by residues Leu-26 to Val-34 and Lys-49. Asp-142 (proton acceptor) is an active-site residue. Phosphothreonine; by LKB1 is present on Thr-175. Thr-261 bears the Phosphothreonine; by PKA mark. Residue Ser-295 is modified to Phosphoserine. The region spanning Asp-298–Asp-340 is the UBA domain. The span at Pro-346–Asp-367 shows a compositional bias: basic and acidic residues. Disordered regions lie at residues Pro-346–Trp-476 and Arg-492–Glu-516. A phosphoserine mark is found at Ser-368, Ser-383, Ser-394, Ser-413, Ser-424, and Ser-428. The segment covering Ser-411–Pro-429 has biased composition (low complexity). Residues Thr-432–Lys-446 show a composition bias toward pro residues. Phosphoserine is present on Ser-456. Residues Thr-460, Thr-464, and Thr-510 each carry the phosphothreonine modification. Ser-513, Ser-514, and Ser-521 each carry phosphoserine. The KEN box signature appears at Lys-604–Asn-606. Residues Lys-682–Pro-735 are disordered.

The protein belongs to the protein kinase superfamily. CAMK Ser/Thr protein kinase family. SNF1 subfamily. In terms of assembly, interacts with FZR1, a regulatory subunit of the APC ubiquitin ligase complex. Interacts with COPS5. Interacts with PAK1. Mg(2+) is required as a cofactor. Post-translationally, may be phosphorylated at Thr-261 by PKA. Phosphorylated at Thr-175 by STK11/LKB1 in complex with STE20-related adapter-alpha (STRADA) pseudo kinase and CAB39. Not phosphorylated at Thr-175 by CaMKK2. In contrast, it is phosphorylated and activated by CaMKK1. May be inactivated via dephosphorylation of Thr-175 by PP2C. In terms of processing, polyubiquitinated by the APC complex in conjunction with FZR1, leading to its proteasomal degradation. Targeted for proteasomal degradation by interaction with COPS5. BRSK2 levels change during the cell cycle. BRSK2 levels are low at the G1/S boundary and gradually increase as cells progress into G2 phase. BRSK2 levels decrease rapidly at the end of mitosis. As to expression, detected in pancreas islets and in brain (at protein level). Detected in brain and pancreas.

The protein localises to the cytoplasm. The protein resides in the cytoskeleton. It is found in the microtubule organizing center. Its subcellular location is the centrosome. It localises to the perinuclear region. The protein localises to the endoplasmic reticulum. The catalysed reaction is L-seryl-[protein] + ATP = O-phospho-L-seryl-[protein] + ADP + H(+). The enzyme catalyses L-threonyl-[protein] + ATP = O-phospho-L-threonyl-[protein] + ADP + H(+). It catalyses the reaction L-seryl-[tau protein] + ATP = O-phospho-L-seryl-[tau protein] + ADP + H(+). It carries out the reaction L-threonyl-[tau protein] + ATP = O-phospho-L-threonyl-[tau protein] + ADP + H(+). With respect to regulation, activated by phosphorylation on Thr-175 by STK11/LKB1. Its function is as follows. Serine/threonine-protein kinase that plays a key role in polarization of neurons and axonogenesis, cell cycle progress and insulin secretion. Phosphorylates CDK16, CDC25C, MAPT/TAU, PAK1 and WEE1. Following phosphorylation and activation by STK11/LKB1, acts as a key regulator of polarization of cortical neurons, probably by mediating phosphorylation of microtubule-associated proteins such as MAPT/TAU at 'Thr-504' and 'Ser-554'. Also regulates neuron polarization by mediating phosphorylation of WEE1 at 'Ser-642' in post-mitotic neurons, leading to down-regulate WEE1 activity in polarized neurons. Plays a role in the regulation of the mitotic cell cycle progress and the onset of mitosis. Plays a role in the regulation of insulin secretion in response to elevated glucose levels, probably via phosphorylation of CDK16 and PAK1. While BRSK2 phosphorylated at Thr-175 can inhibit insulin secretion, BRSK2 phosphorylated at Thr-261 can promote insulin secretion. Regulates reorganization of the actin cytoskeleton. May play a role in the apoptotic response triggered by endoplasmic reticulum (ER) stress. This Mus musculus (Mouse) protein is Serine/threonine-protein kinase BRSK2 (Brsk2).